The primary structure comprises 102 residues: MSRPTETERCIESLIAVFQKYAGKDGHSVTLSKTEFLSFMNTELAAFTKNQKDPGVLDRMMKKLDLNSDGQLDFQEFLNLIGGLAVACHESFVKAAPPQKRF.

Ser2 is subject to Phosphoserine. A Phosphothreonine modification is found at Thr7. EF-hand domains lie at Glu12 to Phe47 and Lys52 to Ala87. Lys24 carries the post-translational modification N6-acetyllysine. Residues Ser28, Thr30, Glu35, Asp65, Asn67, Asp69, Gln71, and Glu76 each contribute to the Ca(2+) site.

The protein belongs to the S-100 family. In terms of assembly, homodimer; disulfide-linked. Post-translationally, phosphorylation at Thr-7 significantly suppresses homodimerization and promotes association with NCL/nucleolin which induces nuclear translocation. As to expression, smooth muscle and non-muscle tissues.

It localises to the cytoplasm. The protein localises to the nucleus. Facilitates the differentiation and the cornification of keratinocytes. This Oryctolagus cuniculus (Rabbit) protein is Protein S100-A11 (S100A11).